The sequence spans 342 residues: Probable RNA methyltransferase PST_2231 (342 aa).

The Proton acceptor role is filled by Glu-91. In terms of domain architecture, Radical SAM core spans Leu-94–Asp-320. Cys-101 and Cys-325 are joined by a disulfide. Positions 108, 112, and 115 each coordinate [4Fe-4S] cluster. S-adenosyl-L-methionine is bound by residues Gly-153–Glu-154, Ser-183, Ser-206–His-208, and Asn-282. Cys-325 functions as the S-methylcysteine intermediate in the catalytic mechanism.

It belongs to the radical SAM superfamily. RlmN family. The cofactor is [4Fe-4S] cluster.

It localises to the cytoplasm. This Stutzerimonas stutzeri (strain A1501) (Pseudomonas stutzeri) protein is Probable RNA methyltransferase PST_2231.